The primary structure comprises 78 residues: Large ribosomal subunit protein uL24 (78 aa).

Belongs to the universal ribosomal protein uL24 family. As to quaternary structure, part of the 50S ribosomal subunit.

One of two assembly initiator proteins, it binds directly to the 5'-end of the 23S rRNA, where it nucleates assembly of the 50S subunit. Its function is as follows. One of the proteins that surrounds the polypeptide exit tunnel on the outside of the subunit. The chain is Large ribosomal subunit protein uL24 from Campylobacter curvus (strain 525.92).